The primary structure comprises 168 residues: MKKSIFSKKLLVSFGSLVTLAAIPLIAISCGQTNTDQSQQPGSGSTTGGQSGTTTGTDSTTGGQTGSESGTTTGGQTGTTTGGQSDSTSTSKEQGSSDSTSTSKEQGSSDSTSTSKEQGSSDSTSTSKEQGSSDSTSTSKEQGSSDSTSTSKEQGSSDSTSTSNMNTR.

A signal peptide spans 1–29; the sequence is MKKSIFSKKLLVSFGSLVTLAAIPLIAIS. C30 is lipidated: N-palmitoyl cysteine. C30 carries the S-diacylglycerol cysteine lipid modification. Residues 33 to 168 form a disordered region; that stretch reads TNTDQSQQPG…STSTSNMNTR (136 aa). 2 stretches are compositionally biased toward low complexity: residues 35–44 and 52–71; these read TDQSQQPGSG and GTTT…ESGT. Residues 72–81 are compositionally biased toward gly residues; it reads TTGGQTGTTT. Repeat copies occupy residues 81–92, 93–104, 105–116, 117–128, 129–140, 141–152, and 153–164. Residues 81–164 are 7 X 12 AA tandem repeats; sequence TGGQSDSTST…GSSDSTSTSN (84 aa). Positions 82–168 are enriched in low complexity; that stretch reads GGQSDSTSTS…STSTSNMNTR (87 aa).

Its subcellular location is the cell membrane. In terms of biological role, responsible for the antigenic diversity for host adaptation. Expression in E.coli of a construct containing vlpD, vlpE, and vlpF yields antigenically distinguishable products corresponding to each gene. The sequence is that of Variant surface antigen D (vlpD) from Mesomycoplasma hyorhinis (Mycoplasma hyorhinis).